The primary structure comprises 600 residues: Probable translation initiation factor IF-2 (600 aa).

The region spanning 13–228 (LRTPIVAVLG…VLMGLAQRYM (216 aa)) is the tr-type G domain. Positions 22–29 (GHVDHGKT) are G1. 22–29 (GHVDHGKT) serves as a coordination point for GTP. The G2 stretch occupies residues 47–51 (AITQH). Residues 84–87 (DTPG) form a G3 region. Residues 84–88 (DTPGH) and 138–141 (NKID) contribute to the GTP site. The interval 138–141 (NKID) is G4. The disordered stretch occupies residues 140–162 (IDTTPGWNPNPDAPVQGTYDDQS). Residues 206-208 (SAE) are G5.

It belongs to the TRAFAC class translation factor GTPase superfamily. Classic translation factor GTPase family. IF-2 subfamily.

Function in general translation initiation by promoting the binding of the formylmethionine-tRNA to ribosomes. Seems to function along with eIF-2. This chain is Probable translation initiation factor IF-2, found in Halobacterium salinarum (strain ATCC 700922 / JCM 11081 / NRC-1) (Halobacterium halobium).